Consider the following 72-residue polypeptide: Large ribosomal subunit protein bL31 (72 aa).

Residues Cys17, Cys19, Cys37, and Cys40 each contribute to the Zn(2+) site.

It belongs to the bacterial ribosomal protein bL31 family. Type A subfamily. As to quaternary structure, part of the 50S ribosomal subunit. Zn(2+) serves as cofactor.

Binds the 23S rRNA. This Clostridium botulinum (strain ATCC 19397 / Type A) protein is Large ribosomal subunit protein bL31.